A 146-amino-acid chain; its full sequence is Hemoglobin cathodic subunit beta (146 aa).

Positions 2–146 (EWSSSERSTI…LIHALSRQYF (145 aa)) constitute a Globin domain. Positions 63 and 92 each coordinate heme b.

Belongs to the globin family. In terms of assembly, heterotetramer of two alpha chains and two beta chains. Red blood cells.

Functionally, involved in oxygen transport from gills to the various peripheral tissues. This chain is Hemoglobin cathodic subunit beta, found in Gymnothorax unicolor (Brown moray).